A 941-amino-acid polypeptide reads, in one-letter code: Pre-mRNA-processing factor 6 (941 aa).

Positions 1–79 (MNKKKKPFLG…DEDLNDTNYD (79 aa)) are disordered. Positions 39-65 (DANDPVDDRHAPPGKRTVGDQMKKNQA) are enriched in basic and acidic residues. A compositionally biased stretch (acidic residues) spans 66 to 78 (ADDDDEDLNDTNY). Position 143 is a phosphoserine (Ser-143). Phosphothreonine is present on residues Thr-180, Thr-266, and Thr-275. Residue Ser-279 is modified to Phosphoserine. HAT repeat units follow at residues 384–416 (TDIRAKKRVLRKALEHVPNSVRLWKAAVELEEP), 418–444 (DARIMLSRAVECCPTSVELWLALARLE), 445–476 (TYENARKVLNKARENIPTDRHIWITAAKLEEA), 554–586 (NALECARAIYAYALQVFPSKKSVWLRAAYFEKN), 588–620 (GTRESLEALLQRAVAHCPKAEVLWLMGAKSKWL), 622–654 (GDVPAARSILALAFQANPNSEEIWLAAVKLESE), 689–721 (DNIRAAQDLCEEALRHYEDFPKLWMMKGQIEEQ), 723–755 (EMMEKAREAYNQGLKKCPHSTPLWLLLSRLEEK), and 855–887 (RKITKAREWFHRTVKIDSDLGDAWAFFYKFELQ).

Identified in the spliceosome B complex. Identified in the spliceosome C complex. Associates with the U5 snRNP particle. Component of the U4/U6-U5 tri-snRNP complex composed of the U4, U6 and U5 snRNAs and at least PRPF3, PRPF4, PRPF6, PRPF8, PRPF31, SNRNP200, TXNL4A, SNRNP40, DDX23, CD2BP2, PPIH, SNU13, EFTUD2, SART1 and USP39, LSm proteins LSm2-8 and Sm proteins. Interacts with ARAF. Interacts with AR and NR3C1, but not ESR1, independently of the presence of hormones. Interacts with USH1G. Post-translationally, phosphorylated by PRP4K during spliceosome assembly. Widely expressed.

It is found in the nucleus. The protein resides in the nucleoplasm. Its subcellular location is the nucleus speckle. Functionally, involved in pre-mRNA splicing as component of the U4/U6-U5 tri-snRNP complex, one of the building blocks of the spliceosome. Enhances dihydrotestosterone-induced transactivation activity of AR, as well as dexamethasone-induced transactivation activity of NR3C1, but does not affect estrogen-induced transactivation. The protein is Pre-mRNA-processing factor 6 of Homo sapiens (Human).